The primary structure comprises 173 residues: Skp-like protein (173 aa).

The signal sequence occupies residues 1-19; that stretch reads MKKFLLLSLMSLASSTVFA.

It belongs to the Skp family.

The chain is Skp-like protein from Chlamydia muridarum (strain MoPn / Nigg).